The chain runs to 470 residues: Pyruvate kinase I (470 aa).

Arg32 is a binding site for substrate. Residues Asn34, Ser36, Asp66, and Thr67 each coordinate K(+). 34-37 is a binding site for ATP; the sequence is NFSH. ATP contacts are provided by Arg73 and Lys156. Lys220 contacts substrate. Glu222 contributes to the Mg(2+) binding site. Substrate is bound by residues Gly245, Asp246, and Thr278. Asp246 provides a ligand contact to Mg(2+).

The protein belongs to the pyruvate kinase family. In terms of assembly, homotetramer. It depends on Mg(2+) as a cofactor. The cofactor is K(+).

It carries out the reaction pyruvate + ATP = phosphoenolpyruvate + ADP + H(+). It participates in carbohydrate degradation; glycolysis; pyruvate from D-glyceraldehyde 3-phosphate: step 5/5. With respect to regulation, belongs to type I PK; fructose 1,6-bisphosphate-activated. Its function is as follows. Catalyzes the formation of pyruvate in the last step of glycolysis, it is irreversible under physiological conditions. The reaction is critical for the control of metabolic flux in the second part of glycolysis. This is Pyruvate kinase I (pykF) from Salmonella typhimurium (strain LT2 / SGSC1412 / ATCC 700720).